We begin with the raw amino-acid sequence, 97 residues long: High mobility group protein homolog NHP1 (97 aa).

The segment at Met-1–Lys-24 is disordered. A DNA-binding region (HMG box) is located at residues Pro-23–Ala-93.

It is found in the nucleus. This chain is High mobility group protein homolog NHP1, found in Babesia bovis.